The chain runs to 277 residues: 3-methyl-2-oxobutanoate hydroxymethyltransferase (277 aa).

Residues aspartate 53 and aspartate 96 each coordinate Mg(2+). 3-methyl-2-oxobutanoate contacts are provided by residues 53-54 (DS), aspartate 96, and lysine 126. Residue glutamate 128 participates in Mg(2+) binding. The active-site Proton acceptor is glutamate 195.

Belongs to the PanB family. As to quaternary structure, homodecamer; pentamer of dimers. Requires Mg(2+) as cofactor.

The protein resides in the cytoplasm. It carries out the reaction 3-methyl-2-oxobutanoate + (6R)-5,10-methylene-5,6,7,8-tetrahydrofolate + H2O = 2-dehydropantoate + (6S)-5,6,7,8-tetrahydrofolate. It functions in the pathway cofactor biosynthesis; (R)-pantothenate biosynthesis; (R)-pantoate from 3-methyl-2-oxobutanoate: step 1/2. Functionally, catalyzes the reversible reaction in which hydroxymethyl group from 5,10-methylenetetrahydrofolate is transferred onto alpha-ketoisovalerate to form ketopantoate. The protein is 3-methyl-2-oxobutanoate hydroxymethyltransferase of Chlorobaculum tepidum (strain ATCC 49652 / DSM 12025 / NBRC 103806 / TLS) (Chlorobium tepidum).